A 142-amino-acid polypeptide reads, in one-letter code: Large ribosomal subunit protein uL11 (142 aa).

Belongs to the universal ribosomal protein uL11 family. Part of the ribosomal stalk of the 50S ribosomal subunit. Interacts with L10 and the large rRNA to form the base of the stalk. L10 forms an elongated spine to which L12 dimers bind in a sequential fashion forming a multimeric L10(L12)X complex. Post-translationally, one or more lysine residues are methylated.

Its function is as follows. Forms part of the ribosomal stalk which helps the ribosome interact with GTP-bound translation factors. This Vibrio campbellii (strain ATCC BAA-1116) protein is Large ribosomal subunit protein uL11.